The chain runs to 201 residues: Potassium-transporting ATPase KdpC subunit (201 aa).

A helical membrane pass occupies residues 10–30 (VVLVVLTVICGLAYPLAMTGI). Residues 67-105 (HGRPSATSAADPADPTKTVSSPYNAANSSGSNLGPTSKA) are disordered. Low complexity predominate over residues 70–82 (PSATSAADPADPT). The span at 83-105 (KTVSSPYNAANSSGSNLGPTSKA) shows a compositional bias: polar residues.

It belongs to the KdpC family. As to quaternary structure, the system is composed of three essential subunits: KdpA, KdpB and KdpC.

It is found in the cell inner membrane. Its function is as follows. Part of the high-affinity ATP-driven potassium transport (or Kdp) system, which catalyzes the hydrolysis of ATP coupled with the electrogenic transport of potassium into the cytoplasm. This subunit acts as a catalytic chaperone that increases the ATP-binding affinity of the ATP-hydrolyzing subunit KdpB by the formation of a transient KdpB/KdpC/ATP ternary complex. In Rhodopseudomonas palustris (strain BisB5), this protein is Potassium-transporting ATPase KdpC subunit.